Consider the following 95-residue polypeptide: Large ribosomal subunit protein bL27 (95 aa).

Positions 1-6 (MFLQLF) are excised as a propeptide.

This sequence belongs to the bacterial ribosomal protein bL27 family. In terms of processing, the N-terminus is cleaved by ribosomal processing cysteine protease Prp.

The polypeptide is Large ribosomal subunit protein bL27 (Symbiobacterium thermophilum (strain DSM 24528 / JCM 14929 / IAM 14863 / T)).